The following is a 419-amino-acid chain: Tyrosine--tRNA ligase 1 (419 aa).

L-tyrosine is bound at residue Tyr35. Residues 40 to 49 carry the 'HIGH' region motif; sequence PTAGSLHIGH. Residues Tyr172 and Gln176 each coordinate L-tyrosine. A 'KMSKS' region motif is present at residues 232-236; that stretch reads KFGKT. ATP is bound at residue Lys235. The S4 RNA-binding domain occupies 353–418; it reads QDLVELLIES…KKHFCLVKRA (66 aa).

Belongs to the class-I aminoacyl-tRNA synthetase family. TyrS type 1 subfamily. As to quaternary structure, homodimer.

It is found in the cytoplasm. The enzyme catalyses tRNA(Tyr) + L-tyrosine + ATP = L-tyrosyl-tRNA(Tyr) + AMP + diphosphate + H(+). In terms of biological role, catalyzes the attachment of tyrosine to tRNA(Tyr) in a two-step reaction: tyrosine is first activated by ATP to form Tyr-AMP and then transferred to the acceptor end of tRNA(Tyr). This chain is Tyrosine--tRNA ligase 1, found in Vibrio parahaemolyticus serotype O3:K6 (strain RIMD 2210633).